The chain runs to 217 residues: MNQTLLSSFGTPFERVEHALSALREGRGVMVLDDEDRENEGDMIFPAETMTVEQMALTIRHGSGIVCLCITEDRRKQLDLPMMVENNTSAYGTGFTVTIEAAKGVTTGVSAADRVTTVRAAIADGAKPADLHRPGHVFPLRAQPGGVLTRGGHTEATIDLVTLAGFKPAGVLCELTNDDGTMARAPECIAFAGKHNMAVVTIEDLVAYRQAHERKAS.

D-ribulose 5-phosphate contacts are provided by residues 37-38, Asp42, 150-154, and Glu174; these read RE and RGGHT. A Mg(2+)-binding site is contributed by Glu38. His153 lines the Mg(2+) pocket.

Belongs to the DHBP synthase family. In terms of assembly, homodimer. Mg(2+) is required as a cofactor. Requires Mn(2+) as cofactor.

It catalyses the reaction D-ribulose 5-phosphate = (2S)-2-hydroxy-3-oxobutyl phosphate + formate + H(+). Its pathway is cofactor biosynthesis; riboflavin biosynthesis; 2-hydroxy-3-oxobutyl phosphate from D-ribulose 5-phosphate: step 1/1. In terms of biological role, catalyzes the conversion of D-ribulose 5-phosphate to formate and 3,4-dihydroxy-2-butanone 4-phosphate. This is 3,4-dihydroxy-2-butanone 4-phosphate synthase from Citrobacter koseri (strain ATCC BAA-895 / CDC 4225-83 / SGSC4696).